We begin with the raw amino-acid sequence, 1063 residues long: Exportin-1 (1063 aa).

The Importin N-terminal domain occupies 43 to 109 (AQSILTTLKE…KKYVVSLIIK (67 aa)). Positions 1034–1063 (AEEQSNKHQMQRNIPGMLNPHELPEDMQDE) are disordered.

It belongs to the exportin family. As to quaternary structure, interacts with Clbn (via its N-terminus). Associates with the nuclear pore complex via interaction with mbo and Nup214. Interacts with target proteins containing NES sequences such as actin and dl. In terms of tissue distribution, high expression observed in the developing embryonic brain, hind gut and posterior spiracles shortly before dorsal closure; and in the ventral nerve cord, midgut and somatic musculature shortly after dorsal closure. Expression increases when the tissue is well developed.

The protein localises to the nucleus. It localises to the nucleus membrane. Receptor for the leucine-rich nuclear export signal (NES). Binds cooperatively to the NES on its target protein and to the small GTPase Ran in its active GTP-bound form. Involved in the export of dl, RpS2 and the pre-40S ribosome from the nucleus to the cytoplasm. Plays an important role in nuclear pore assembly by mediating nucleoporin condensation and biogenesis of annulate lamellae. Required for the function or maintenance of certain tissues such as brain and gut. This is Exportin-1 from Drosophila melanogaster (Fruit fly).